A 682-amino-acid polypeptide reads, in one-letter code: Heat shock 70 kDa protein 10, mitochondrial (682 aa).

A mitochondrion-targeting transit peptide spans methionine 1–phenylalanine 50. The segment at lysine 646–lysine 682 is disordered. Gly residues predominate over residues methionine 651 to glycine 667. Positions proline 673–lysine 682 are enriched in acidic residues.

This sequence belongs to the heat shock protein 70 (TC 1.A.33) family. DnaK subfamily.

It localises to the mitochondrion. Chaperone involved in the maturation of iron-sulfur [Fe-S] cluster-containing proteins. Has a low intrinsic ATPase activity which is markedly stimulated by HSCB and ISU1. In cooperation with other chaperones, Hsp70s are key components that facilitate folding of de novo synthesized proteins, assist translocation of precursor proteins into organelles, and are responsible for degradation of damaged protein under stress conditions. The polypeptide is Heat shock 70 kDa protein 10, mitochondrial (Arabidopsis thaliana (Mouse-ear cress)).